The primary structure comprises 912 residues: DNA ligase 4 (912 aa).

The ATP site is built by Glu276, Thr277, Lys278, Leu279, Arg283, Glu336, Lys350, Phe372, Glu432, Lys437, Lys454, and Lys456. Lys278 acts as the N6-AMP-lysine intermediate in catalysis. Glu336 contributes to the Mg(2+) binding site. Mg(2+) is bound at residue Glu432. Residues 615–625 (LASKHLYIDEY) form a required for catalytic activity region. 2 consecutive BRCT domains span residues 659–748 (KVSS…PAFM) and 809–912 (CKLC…QFLI).

It belongs to the ATP-dependent DNA ligase family. In terms of assembly, interacts with XRCC4; the LIG4-XRCC4 subcomplex has a 1:2 stoichiometry. Component of the core long-range non-homologous end joining (NHEJ) complex (also named DNA-PK complex) composed of PRKDC, LIG4, XRCC4, XRCC6/Ku70, XRCC5/Ku86 and NHEJ1/XLF. Additional component of the NHEJ complex includes PAXX. Following autophosphorylation, PRKDC dissociates from DNA, leading to formation of the short-range NHEJ complex, composed of LIG4, XRCC4, XRCC6/Ku70, XRCC5/Ku86 and NHEJ1/XLF. Mg(2+) serves as cofactor.

It is found in the nucleus. It catalyses the reaction ATP + (deoxyribonucleotide)n-3'-hydroxyl + 5'-phospho-(deoxyribonucleotide)m = (deoxyribonucleotide)n+m + AMP + diphosphate.. DNA ligase involved in DNA non-homologous end joining (NHEJ); required for double-strand break (DSB) repair and V(D)J recombination. Catalyzes the NHEJ ligation step of the broken DNA during DSB repair by resealing the DNA breaks after the gap filling is completed. Joins single-strand breaks in a double-stranded polydeoxynucleotide in an ATP-dependent reaction. LIG4 is mechanistically flexible: it can ligate nicks as well as compatible DNA overhangs alone, while in the presence of XRCC4, it can ligate ends with 2-nucleotides (nt) microhomology and 1-nt gaps. Forms a subcomplex with XRCC4; the LIG4-XRCC4 subcomplex is responsible for the NHEJ ligation step and XRCC4 enhances the joining activity of LIG4. This is DNA ligase 4 from Gallus gallus (Chicken).